The chain runs to 507 residues: Glycerol kinase (507 aa).

ADP is bound at residue Thr-14. ATP is bound by residues Thr-14, Thr-15, and Ser-16. Thr-14 lines the sn-glycerol 3-phosphate pocket. Arg-18 lines the ADP pocket. 4 residues coordinate sn-glycerol 3-phosphate: Arg-84, Glu-85, Tyr-137, and Asp-247. The glycerol site is built by Arg-84, Glu-85, Tyr-137, Asp-247, and Gln-248. Thr-269 and Gly-312 together coordinate ADP. Thr-269, Gly-312, Gln-316, and Gly-413 together coordinate ATP. 2 residues coordinate ADP: Gly-413 and Asn-417.

This sequence belongs to the FGGY kinase family.

It carries out the reaction glycerol + ATP = sn-glycerol 3-phosphate + ADP + H(+). It participates in polyol metabolism; glycerol degradation via glycerol kinase pathway; sn-glycerol 3-phosphate from glycerol: step 1/1. With respect to regulation, inhibited by fructose 1,6-bisphosphate (FBP). Its function is as follows. Key enzyme in the regulation of glycerol uptake and metabolism. Catalyzes the phosphorylation of glycerol to yield sn-glycerol 3-phosphate. This Psychromonas ingrahamii (strain DSM 17664 / CCUG 51855 / 37) protein is Glycerol kinase.